We begin with the raw amino-acid sequence, 269 residues long: Flagellar hook-basal body complex protein FlhP (269 aa).

Positions 7 to 65 (TASTTLNQLQQQIDTISSNLSNSNTTGYKAKDTNFSELVRQQFDQVDEKNEEVAKARKT) form a coiled coil.

The protein belongs to the flagella basal body rod proteins family.

The sequence is that of Flagellar hook-basal body complex protein FlhP (flhP) from Bacillus subtilis (strain 168).